The sequence spans 550 residues: Hydroxylamine reductase (550 aa).

[2Fe-2S] cluster contacts are provided by cysteine 3, cysteine 6, cysteine 18, and cysteine 25. The hybrid [4Fe-2O-2S] cluster site is built by histidine 249, glutamate 273, cysteine 317, cysteine 405, cysteine 433, cysteine 458, glutamate 492, and lysine 494. Position 405 is a cysteine persulfide (cysteine 405).

This sequence belongs to the HCP family. It depends on [2Fe-2S] cluster as a cofactor. Requires hybrid [4Fe-2O-2S] cluster as cofactor.

The protein localises to the cytoplasm. It carries out the reaction A + NH4(+) + H2O = hydroxylamine + AH2 + H(+). Its function is as follows. Catalyzes the reduction of hydroxylamine to form NH(3) and H(2)O. In Escherichia coli (strain SMS-3-5 / SECEC), this protein is Hydroxylamine reductase.